The primary structure comprises 276 residues: Undecaprenyl-diphosphatase (276 aa).

The next 5 membrane-spanning stretches (helical) occupy residues 85-105 (MNVV…EKTI), 108-128 (VLFA…AILW), 187-207 (VATE…TLYE), 217-237 (VDSV…AFAC), and 253-273 (FAWY…SGWI).

The protein belongs to the UppP family.

It is found in the cell inner membrane. It catalyses the reaction di-trans,octa-cis-undecaprenyl diphosphate + H2O = di-trans,octa-cis-undecaprenyl phosphate + phosphate + H(+). In terms of biological role, catalyzes the dephosphorylation of undecaprenyl diphosphate (UPP). Confers resistance to bacitracin. This is Undecaprenyl-diphosphatase from Burkholderia mallei (strain NCTC 10247).